We begin with the raw amino-acid sequence, 109 residues long: Large ribosomal subunit protein uL22 (109 aa).

It belongs to the universal ribosomal protein uL22 family. In terms of assembly, part of the 50S ribosomal subunit.

Its function is as follows. This protein binds specifically to 23S rRNA; its binding is stimulated by other ribosomal proteins, e.g. L4, L17, and L20. It is important during the early stages of 50S assembly. It makes multiple contacts with different domains of the 23S rRNA in the assembled 50S subunit and ribosome. Functionally, the globular domain of the protein is located near the polypeptide exit tunnel on the outside of the subunit, while an extended beta-hairpin is found that lines the wall of the exit tunnel in the center of the 70S ribosome. This Neisseria gonorrhoeae (strain ATCC 700825 / FA 1090) protein is Large ribosomal subunit protein uL22.